The primary structure comprises 333 residues: 4-hydroxy-2-oxovalerate aldolase (333 aa).

In terms of domain architecture, Pyruvate carboxyltransferase spans 4–254; it reads VKIFDLTLRD…DCGIDLYKTM (251 aa). 12-13 is a substrate binding site; that stretch reads RD. Mn(2+) is bound at residue D13. The Proton acceptor role is filled by H16. H193 lines the substrate pocket. Mn(2+) is bound by residues H193 and H195. Y284 lines the substrate pocket.

It belongs to the 4-hydroxy-2-oxovalerate aldolase family.

The enzyme catalyses (S)-4-hydroxy-2-oxopentanoate = acetaldehyde + pyruvate. In Desulfitobacterium hafniense (strain DSM 10664 / DCB-2), this protein is 4-hydroxy-2-oxovalerate aldolase.